The following is a 367-amino-acid chain: MHFVSYSLCYDVRSNIMEQPIYFYEPDENHGFLANFYPCSITVSGTCWPSSEHYYQAQKFDDVRLQEKVLRAEDAAQAFRLSREYQQWQRHDWYDIRVEVMRFIVREKFLQNTPLAHQLLATGDTELKEHSHKDAFWGDGGDGHGRNELGRILMMVREELQEHAPYNLVQFIDSAKLPTQWGTFQMYGFIEKATGKEHLALVYGDIEQQAAPLIRLHSECLTGDALFSARCDCGFQLAKALQNIVAEGAGVLLYLRQEGRGIGLINKIRAYHLQDDGADTVEANEQLGFGADMRDYAFCRGILSFLGIERVRLMTNNPRKVKALQLANIEVTERVPLQEGNNPHNHQYLRTKADKLGHMFDRNFVKP.

GTP is bound at residue 215-219 (RLHSE). Positions 220, 231, and 233 each coordinate Zn(2+). GTP-binding positions include Gln-236, 258 to 260 (EGR), and Thr-280. The active-site Proton acceptor is the Asp-292. The active-site Nucleophile is the Arg-294. GTP is bound by residues Thr-315 and Lys-320.

This sequence in the N-terminal section; belongs to the YbiA family. It in the C-terminal section; belongs to the GTP cyclohydrolase II family. The cofactor is Zn(2+).

The enzyme catalyses 2,5-diamino-6-hydroxy-4-(5-phosphoribosylamino)-pyrimidine + H2O = 2,5,6-triamino-4-hydroxypyrimidine + D-ribose 5-phosphate. It carries out the reaction 5-amino-6-(5-phospho-D-ribosylamino)uracil + H2O = 5,6-diaminouracil + D-ribose 5-phosphate. The catalysed reaction is GTP + 4 H2O = 2,5-diamino-6-hydroxy-4-(5-phosphoribosylamino)-pyrimidine + formate + 2 phosphate + 3 H(+). The protein operates within cofactor biosynthesis; riboflavin biosynthesis; 5-amino-6-(D-ribitylamino)uracil from GTP: step 1/4. Its function is as follows. Catalyzes the hydrolysis of the N-glycosidic bond in the first two intermediates of riboflavin biosynthesis, which are highly reactive metabolites, yielding relatively innocuous products. Thus, can divert a surplus of harmful intermediates into relatively harmless products and pre-empt the damage these intermediates would otherwise do. Has no activity against GTP, nucleoside monophosphates or ADP-ribose. Catalyzes the conversion of GTP to 2,5-diamino-6-ribosylamino-4(3H)-pyrimidinone 5'-phosphate (DARP), formate and pyrophosphate. In Vibrio vulnificus (strain YJ016), this protein is Riboflavin biosynthesis protein VVA0006.